A 710-amino-acid chain; its full sequence is Subtilisin-like protease SBT4.8 (710 aa).

A signal peptide spans 1–23 (MVKRASFCLLSCLIILFLSSVSA). The propeptide at 24 to 111 (IIYDPQDKQV…VFRSKNYKLQ (88 aa)) is activation peptide. One can recognise an Inhibitor I9 domain in the interval 33–110 (VYVVYMGSLP…SVFRSKNYKL (78 aa)). A Peptidase S8 domain is found at 115–559 (SWDFMGMKEG…AGHVDPIAAI (445 aa)). D143 functions as the Charge relay system in the catalytic mechanism. An N-linked (GlcNAc...) asparagine glycan is attached at N174. The active-site Charge relay system is H198. N-linked (GlcNAc...) asparagine glycosylation is found at N221, N364, and N419. The PA domain occupies 354 to 414 (KYPLEYGDYL…VLSQDDFDSL (61 aa)). S498 acts as the Charge relay system in catalysis. N-linked (GlcNAc...) asparagine glycosylation is found at N535, N568, N580, N618, and N636.

The protein belongs to the peptidase S8 family. The C-terminal propeptide is autocleaved.

The protein localises to the secreted. In Arabidopsis thaliana (Mouse-ear cress), this protein is Subtilisin-like protease SBT4.8.